A 459-amino-acid chain; its full sequence is DIMBOA UDP-glucosyltransferase BX8 (459 aa).

His19 serves as the catalytic Proton acceptor. His19 provides a ligand contact to an anthocyanidin. Asp119 serves as the catalytic Charge relay. Positions 141, 340, 342, 357, 360, 361, 362, and 365 each coordinate UDP-alpha-D-glucose. Gly380 lines the an anthocyanidin pocket. Residues Asp381 and Gln382 each coordinate UDP-alpha-D-glucose.

It belongs to the UDP-glycosyltransferase family. Requires Mg(2+) as cofactor. Ca(2+) is required as a cofactor. As to expression, expressed at the same levels in roots and shoots.

The catalysed reaction is DIMBOA + UDP-alpha-D-glucose = DIMBOA beta-D-glucoside + UDP + H(+). It catalyses the reaction DIBOA + UDP-alpha-D-glucose = DIBOA beta-D-glucoside + UDP + H(+). Its function is as follows. Glucosyltransferase involved in the last step of benzoxazinoid glucoside biosynthesis. Catalyzes the glucosylation of hydroxamic acids utilizing UDP-glucose as glucose doner, reducing the toxicity of these natural insecticides for storage. Can use DIMBOA and DIBOA as substrates, HMBOA (2-hydroxy-7-methoxy-2H-1,4-benzoxazin-3(4H)-one) and HBOA (2-hydroxy-2H-1,4-benzoxazin-3(4H)-one) with a lower efficiency, but not indole acetic acid or quercitin. This is DIMBOA UDP-glucosyltransferase BX8 (Bx8) from Zea mays (Maize).